A 116-amino-acid chain; its full sequence is Tachykinin-3 (116 aa).

The N-terminal stretch at 1 to 20 is a signal peptide; sequence MRSAMLFAAVLALSLAWTFG. The propeptide occupies 21–79; sequence AACEEPQEQGGRLSKDSDLSLLPPPLLRRLYDSRSISLEGLLKVLSKASVGPKETSLPQ. Methionine amide is present on Met-91. A disordered region spans residues 92–116; that stretch reads GKRNSQPDTPADVVEENTPSFGVLK. Positions 95-116 are excised as a propeptide; it reads NSQPDTPADVVEENTPSFGVLK.

This sequence belongs to the tachykinin family.

It is found in the secreted. Its function is as follows. Tachykinins are active peptides which excite neurons, evoke behavioral responses, are potent vasodilators and secretagogues, and contract (directly or indirectly) many smooth muscles. Is a critical central regulator of gonadal function. This chain is Tachykinin-3 (Tac3), found in Rattus norvegicus (Rat).